Here is a 330-residue protein sequence, read N- to C-terminus: Glycerol-3-phosphate dehydrogenase [NAD(P)+] (330 aa).

Trp13, Arg33, and Lys103 together coordinate NADPH. Positions 103, 131, and 133 each coordinate sn-glycerol 3-phosphate. An NADPH-binding site is contributed by Ala135. The sn-glycerol 3-phosphate site is built by Lys186, Asp239, Ser249, Arg250, and Asn251. The Proton acceptor role is filled by Lys186. NADPH is bound at residue Arg250. Val274 and Glu276 together coordinate NADPH.

The protein belongs to the NAD-dependent glycerol-3-phosphate dehydrogenase family.

It localises to the cytoplasm. The catalysed reaction is sn-glycerol 3-phosphate + NAD(+) = dihydroxyacetone phosphate + NADH + H(+). It catalyses the reaction sn-glycerol 3-phosphate + NADP(+) = dihydroxyacetone phosphate + NADPH + H(+). It participates in membrane lipid metabolism; glycerophospholipid metabolism. In terms of biological role, catalyzes the reduction of the glycolytic intermediate dihydroxyacetone phosphate (DHAP) to sn-glycerol 3-phosphate (G3P), the key precursor for phospholipid synthesis. The chain is Glycerol-3-phosphate dehydrogenase [NAD(P)+] from Erythrobacter litoralis (strain HTCC2594).